The sequence spans 231 residues: Albumin-2 (231 aa).

Hemopexin repeat units follow at residues 4–55 (TGYI…FKSL), 62–112 (SYGV…FPFF), 118–166 (ENGI…FPCF), and 172–223 (ESGT…WPSL). The Ca(2+) site is built by Asn-8, Asp-66, Asp-122, and Asp-176.

As to quaternary structure, monomer and homodimer.

The protein resides in the cytoplasm. It localises to the cytosol. In terms of biological role, may play a role in response to oxidative stress and polyamine biosynthesis. This Pisum sativum (Garden pea) protein is Albumin-2.